We begin with the raw amino-acid sequence, 400 residues long: Cytochrome b (400 aa).

The chain crosses the membrane as a helical span at residues 47 to 67; sequence LGSIAGIALVIQIITGVILAM. Heme b contacts are provided by His-97 and His-111. The next 8 membrane-spanning stretches (helical) occupy residues 98–118, 131–151, 166–186, 194–214, 247–267, 306–326, 341–361, and 368–388; these read AVGA…GLYY, IGII…VLPW, FSAI…GFSV, FFSL…LHLV, FVGF…EPNY, LGGV…PWLD, IAFW…GQPA, and ISRF…PLIG. Positions 198 and 212 each coordinate heme b.

Belongs to the cytochrome b family. In terms of assembly, the main subunits of complex b-c1 are: cytochrome b, cytochrome c1 and the Rieske protein. Heme b is required as a cofactor.

The protein localises to the cell membrane. Functionally, component of the ubiquinol-cytochrome c reductase complex (complex III or cytochrome b-c1 complex), which is a respiratory chain that generates an electrochemical potential coupled to ATP synthesis. The polypeptide is Cytochrome b (petB) (Rickettsia bellii (strain RML369-C)).